The chain runs to 29 residues: Varv peptide F (29 aa).

The segment at residues 1-29 is a cross-link (cyclopeptide (Gly-Asn)); that stretch reads GVPICGETCTLGTCYTAGCSCSWPVCTRN. Intrachain disulfides connect Cys5-Cys19, Cys9-Cys21, and Cys14-Cys26.

This is a cyclic peptide.

Probably participates in a plant defense mechanism. Has cytotoxic activity against a variety of drug-resistant and drug-sensitive human tumor cell lines. The sequence is that of Varv peptide F from Viola arvensis (European field pansy).